The following is a 340-amino-acid chain: Probable sugar phosphate/phosphate translocator At3g14410 (340 aa).

10 helical membrane passes run 12–32, 44–64, 80–100, 110–130, 141–161, 163–183, 197–217, 234–254, 260–282, and 286–305; these read EFVT…QIFF, FPYP…LCFL, LEIY…TLWL, VAFA…LGVA, LLIM…ELNI, WIGV…LIFM, ISLM…PWIF, VVLT…FLVI, LTIR…LLFA, and LTII…AAYN. The tract at residues 320 to 340 is disordered; it reads ETPGDAESIPLVSQGNTNTER. Polar residues predominate over residues 330-340; it reads LVSQGNTNTER.

Belongs to the TPT transporter family. TPT (TC 2.A.7.9) subfamily.

The protein localises to the membrane. This is Probable sugar phosphate/phosphate translocator At3g14410 from Arabidopsis thaliana (Mouse-ear cress).